The sequence spans 922 residues: DNA gyrase subunit A (922 aa).

The span at 1–14 shows a compositional bias: low complexity; the sequence is MTETPTDGGSTPPS. The segment at 1-24 is disordered; that stretch reads MTETPTDGGSTPPSDGGGPGGRIE. In terms of domain architecture, Topo IIA-type catalytic spans 49–518; it reads LPDVRDGLKP…ADGDLSMEDL (470 aa). Catalysis depends on Tyr137, which acts as the O-(5'-phospho-DNA)-tyrosine intermediate. A GyrA-box motif is present at residues 545–551; that stretch reads QRRGGKG. The segment at 861–922 is disordered; it reads EANGDDELDE…TEPDPGESDG (62 aa). Composition is skewed to acidic residues over residues 863-890 and 912-922; these read NGDD…DESA and DTEPDPGESDG.

The protein belongs to the type II topoisomerase GyrA/ParC subunit family. As to quaternary structure, heterotetramer, composed of two GyrA and two GyrB chains. In the heterotetramer, GyrA contains the active site tyrosine that forms a transient covalent intermediate with DNA, while GyrB binds cofactors and catalyzes ATP hydrolysis.

It is found in the cytoplasm. It carries out the reaction ATP-dependent breakage, passage and rejoining of double-stranded DNA.. In terms of biological role, a type II topoisomerase that negatively supercoils closed circular double-stranded (ds) DNA in an ATP-dependent manner to modulate DNA topology and maintain chromosomes in an underwound state. Negative supercoiling favors strand separation, and DNA replication, transcription, recombination and repair, all of which involve strand separation. Also able to catalyze the interconversion of other topological isomers of dsDNA rings, including catenanes and knotted rings. Type II topoisomerases break and join 2 DNA strands simultaneously in an ATP-dependent manner. The sequence is that of DNA gyrase subunit A from Nocardioides sp. (strain ATCC BAA-499 / JS614).